A 146-amino-acid polypeptide reads, in one-letter code: Hemoglobin subunit beta-1 (146 aa).

One can recognise a Globin domain in the interval 2-146 (KWSDKERAVI…VVSALGKQYC (145 aa)). Heme b is bound by residues His63 and His92.

Belongs to the globin family. As to quaternary structure, hb1 is a heterotetramer of two alpha-1 chains and two beta-1 chains; Hb2 is a heterotetramer of two alpha-2 chains and two beta-1 chains. In terms of tissue distribution, red blood cells.

Functionally, involved in oxygen transport from gills to the various peripheral tissues. The protein is Hemoglobin subunit beta-1 (hbb1) of Anarhichas minor (Arctic spotted wolffish).